A 103-amino-acid chain; its full sequence is MYAVFQSGGKQHRVSEGQTLRLEKLDVETGATVEFDKVLLVANGEEIAVGAPLVEGGKVTAEVVQHGRGDKVKIVKFRRRKHSRKQAGHRQWFTEVKITGINA.

It belongs to the bacterial ribosomal protein bL21 family. As to quaternary structure, part of the 50S ribosomal subunit. Contacts protein L20.

Its function is as follows. This protein binds to 23S rRNA in the presence of protein L20. This is Large ribosomal subunit protein bL21 from Vibrio atlanticus (strain LGP32) (Vibrio splendidus (strain Mel32)).